Here is a 60-residue protein sequence, read N- to C-terminus: Large ribosomal subunit protein bL32 (60 aa).

Positions 1–23 (MAVPKRKKSKSRRNMHRSHHAIK) are disordered.

It belongs to the bacterial ribosomal protein bL32 family.

This chain is Large ribosomal subunit protein bL32, found in Wolbachia sp. subsp. Brugia malayi (strain TRS).